We begin with the raw amino-acid sequence, 667 residues long: DNA ligase (667 aa).

NAD(+) contacts are provided by residues 32-36 (DSEYD), 81-82 (SL), and Glu110. The active-site N6-AMP-lysine intermediate is Lys112. Arg133, Glu167, Lys283, and Lys307 together coordinate NAD(+). Cys401, Cys404, Cys419, and Cys424 together coordinate Zn(2+). The BRCT domain maps to 586–667 (EGHPEFSGKT…FVDKQNELNS (82 aa)).

Belongs to the NAD-dependent DNA ligase family. LigA subfamily. The cofactor is Mg(2+). Mn(2+) serves as cofactor.

The catalysed reaction is NAD(+) + (deoxyribonucleotide)n-3'-hydroxyl + 5'-phospho-(deoxyribonucleotide)m = (deoxyribonucleotide)n+m + AMP + beta-nicotinamide D-nucleotide.. Functionally, DNA ligase that catalyzes the formation of phosphodiester linkages between 5'-phosphoryl and 3'-hydroxyl groups in double-stranded DNA using NAD as a coenzyme and as the energy source for the reaction. It is essential for DNA replication and repair of damaged DNA. The sequence is that of DNA ligase from Staphylococcus aureus (strain COL).